The primary structure comprises 1318 residues: Meiotically up-regulated gene 79 protein (1318 aa).

Disordered regions lie at residues 177–198 (PVNS…SGSY), 208–227 (EEEL…IVVT), and 360–387 (PQAL…PPKG). The segment covering 364–384 (AAAESPTTKAPTTKAPTSEAP) has biased composition (low complexity). Positions 1049–1158 (MISYKKMVLS…WIHSLNFNAA (110 aa)) constitute a PH domain.

Its subcellular location is the nucleus. Appears to have a role in sporulation. This Schizosaccharomyces pombe (strain 972 / ATCC 24843) (Fission yeast) protein is Meiotically up-regulated gene 79 protein (mug79).